The sequence spans 233 residues: Ribonuclease 3 (233 aa).

Residues 6-135 enclose the RNase III domain; the sequence is QDYLAKEFNI…FIGALYLDQG (130 aa). Position 48 (glutamate 48) interacts with Mg(2+). Aspartate 52 is a catalytic residue. Residues aspartate 121 and glutamate 124 each coordinate Mg(2+). Glutamate 124 is a catalytic residue. The DRBM domain maps to 161–230; that stretch reads DAKTSLQEFL…AQQALDNMRN (70 aa). Residues 205 to 233 are disordered; it reads IGEGKGSSKKHAEMQAAQQALDNMRNKNK.

Belongs to the ribonuclease III family. As to quaternary structure, homodimer. It depends on Mg(2+) as a cofactor.

The protein resides in the cytoplasm. The catalysed reaction is Endonucleolytic cleavage to 5'-phosphomonoester.. Its function is as follows. Digests double-stranded RNA. Involved in the processing of primary rRNA transcript to yield the immediate precursors to the large and small rRNAs (23S and 16S). Processes some mRNAs, and tRNAs when they are encoded in the rRNA operon. Processes pre-crRNA and tracrRNA of type II CRISPR loci if present in the organism. The sequence is that of Ribonuclease 3 from Limosilactobacillus reuteri (strain DSM 20016) (Lactobacillus reuteri).